The sequence spans 144 residues: MSHNSQAFLSTNAGLPPSYETIKEEYGVTELGEPSNSAVVRTTVINMPREVSVPDHVVWSLFNTLFFNACCLGFVAYAYSVKSRDRKMVGDVVGAQAYASTAKCLNISSLIFSILMVIICIIIFSTTSVVVFQSFAQRTPHSGF.

Methionine 1 bears the N-acetylmethionine mark. Topologically, residues 1–56 (MSHNSQAFLSTNAGLPPSYETIKEEYGVTELGEPSNSAVVRTTVINMPREVSVPDH) are cytoplasmic. Tyrosine 19 is subject to Phosphotyrosine. The segment at residues 57 to 77 (VVWSLFNTLFFNACCLGFVAY) is an intramembrane region (helical). S-palmitoyl cysteine attachment occurs at residues cysteine 70, cysteine 71, and cysteine 104. At 78–110 (AYSVKSRDRKMVGDVVGAQAYASTAKCLNISSL) the chain is on the cytoplasmic side. Residues 111 to 131 (IFSILMVIICIIIFSTTSVVV) traverse the membrane as a helical segment. Residues 132–144 (FQSFAQRTPHSGF) lie on the Extracellular side of the membrane.

It belongs to the CD225/Dispanin family. Interacts with CD81. Palmitoylation on membrane-proximal cysteines controls clustering in membrane compartments and antiviral activity. Post-translationally, phosphorylation at Tyr-19 is required for endosomal and lysosomal location. In terms of tissue distribution, predominantly expressed in nascent primordial germ cells, as well as in gonadal germ cells.

Its subcellular location is the cell membrane. The protein resides in the lysosome membrane. It localises to the late endosome membrane. Functionally, IFN-induced antiviral protein which inhibits the entry of viruses to the host cell cytoplasm, permitting endocytosis, but preventing subsequent viral fusion and release of viral contents into the cytosol. Active against multiple viruses, including influenza A virus, SARS coronavirus (SARS-CoV), Marburg virus (MARV) and Ebola virus (EBOV), Dengue virus (DNV) and West Nile virus (WNV). Can inhibit: influenza virus hemagglutinin protein-mediated viral entry, MARV and EBOV GP1,2-mediated viral entry and SARS-CoV S protein-mediated viral entry. Induces cell cycle arrest and mediates apoptosis by caspase activation and in p53-independent manner. This is Interferon-induced transmembrane protein 2 (Ifitm2) from Mus musculus (Mouse).